A 211-amino-acid chain; its full sequence is Probable metallo-hydrolase YqgX (211 aa).

Zn(2+)-binding residues include H54, H56, D58, H59, H130, D149, and H190.

Belongs to the metallo-beta-lactamase superfamily. Glyoxalase II family. It depends on Zn(2+) as a cofactor.

This chain is Probable metallo-hydrolase YqgX (yqgX), found in Bacillus subtilis (strain 168).